Here is a 385-residue protein sequence, read N- to C-terminus: Probable dual-specificity RNA methyltransferase RlmN (385 aa).

The tract at residues 1 to 24 (MTATTAESGNLLPLVSGRSRPPRH) is disordered. The active-site Proton acceptor is the Glu114. The Radical SAM core domain maps to 120–364 (YPQRATVCVS…AATVRDTRGR (245 aa)). A disulfide bridge links Cys127 with Cys370. Cys134, Cys138, and Cys141 together coordinate [4Fe-4S] cluster. S-adenosyl-L-methionine contacts are provided by residues 194–195 (GE), Ser228, 251–253 (SLH), and Asn327. Catalysis depends on Cys370, which acts as the S-methylcysteine intermediate.

It belongs to the radical SAM superfamily. RlmN family. The cofactor is [4Fe-4S] cluster.

It localises to the cytoplasm. It catalyses the reaction adenosine(2503) in 23S rRNA + 2 reduced [2Fe-2S]-[ferredoxin] + 2 S-adenosyl-L-methionine = 2-methyladenosine(2503) in 23S rRNA + 5'-deoxyadenosine + L-methionine + 2 oxidized [2Fe-2S]-[ferredoxin] + S-adenosyl-L-homocysteine. It carries out the reaction adenosine(37) in tRNA + 2 reduced [2Fe-2S]-[ferredoxin] + 2 S-adenosyl-L-methionine = 2-methyladenosine(37) in tRNA + 5'-deoxyadenosine + L-methionine + 2 oxidized [2Fe-2S]-[ferredoxin] + S-adenosyl-L-homocysteine. Its function is as follows. Specifically methylates position 2 of adenine 2503 in 23S rRNA and position 2 of adenine 37 in tRNAs. This Parafrankia sp. (strain EAN1pec) protein is Probable dual-specificity RNA methyltransferase RlmN.